We begin with the raw amino-acid sequence, 466 residues long: Argininosuccinate lyase (466 aa).

Ser-27, Asn-114, and Thr-159 together coordinate 2-(N(omega)-L-arginino)succinate. The active-site Proton acceptor is the His-160. Ser-281 functions as the Proton donor in the catalytic mechanism. 4 residues coordinate 2-(N(omega)-L-arginino)succinate: Asn-289, Tyr-321, Gln-326, and Lys-329.

The protein belongs to the lyase 1 family. Argininosuccinate lyase subfamily. As to quaternary structure, homotetramer. Eye lens.

The enzyme catalyses 2-(N(omega)-L-arginino)succinate = fumarate + L-arginine. It functions in the pathway amino-acid biosynthesis; L-arginine biosynthesis; L-arginine from L-ornithine and carbamoyl phosphate: step 3/3. Delta crystallin, the principal crystallin in embryonic lens, is found only in birds and reptiles. This protein also functions as an enzymatically active argininosuccinate lyase. The protein is Argininosuccinate lyase (ASL) of Anser anser anser (Western greylag goose).